The following is a 459-amino-acid chain: Nuclear hormone receptor family member nhr-11 (459 aa).

Positions 2-81 form a DNA-binding region, nuclear receptor; it reads GPLCAVCESP…AGMRSELVRS (80 aa). 2 NR C4-type zinc fingers span residues 5-26 and 42-69; these read CAVC…CKAC and CAAD…LRKC. Disordered regions lie at residues 90–119 and 134–162; these read RRKD…EEMD and DLPL…SSFD. The segment covering 97–115 has biased composition (low complexity); sequence NSDAAPNSNSPSTRQSSSP. In terms of domain architecture, NR LBD spans 188–458; it reads ENNSILQYYH…SMLHEMLNFQ (271 aa).

The protein belongs to the nuclear hormone receptor family.

It localises to the nucleus. Orphan nuclear receptor. In Caenorhabditis elegans, this protein is Nuclear hormone receptor family member nhr-11 (nhr-11).